The sequence spans 269 residues: Tryptophan synthase alpha chain (269 aa).

Catalysis depends on proton acceptor residues glutamate 49 and aspartate 60.

Belongs to the TrpA family. In terms of assembly, tetramer of two alpha and two beta chains.

It carries out the reaction (1S,2R)-1-C-(indol-3-yl)glycerol 3-phosphate + L-serine = D-glyceraldehyde 3-phosphate + L-tryptophan + H2O. It participates in amino-acid biosynthesis; L-tryptophan biosynthesis; L-tryptophan from chorismate: step 5/5. The alpha subunit is responsible for the aldol cleavage of indoleglycerol phosphate to indole and glyceraldehyde 3-phosphate. This chain is Tryptophan synthase alpha chain, found in Stutzerimonas stutzeri (strain A1501) (Pseudomonas stutzeri).